Here is a 109-residue protein sequence, read N- to C-terminus: Elongation factor G, chloroplastic (109 aa).

The protein belongs to the GTP-binding elongation factor family. EF-G/EF-2 subfamily.

It localises to the plastid. The protein localises to the chloroplast. It participates in protein biosynthesis; polypeptide chain elongation. Functionally, chloroplast-localized elongation factor EF-G involved in protein synthesis in plastids. Catalyzes the GTP-dependent ribosomal translocation step during translation elongation. During this step, the ribosome changes from the pre-translocational (PRE) to the post-translocational (POST) state as the newly formed A-site-bound peptidyl-tRNA and P-site-bound deacylated tRNA move to the P and E sites, respectively. Catalyzes the coordinated movement of the two tRNA molecules, the mRNA and conformational changes in the ribosome. The chain is Elongation factor G, chloroplastic from Arachis hypogaea (Peanut).